A 511-amino-acid polypeptide reads, in one-letter code: Sterol 14-alpha demethylase resB (511 aa).

A helical membrane pass occupies residues 3–23; the sequence is ILWIVAYALLAFAASIALNLV. Position 451 (cysteine 451) interacts with heme.

This sequence belongs to the cytochrome P450 family. It depends on heme as a cofactor.

The protein localises to the membrane. It catalyses the reaction a 14alpha-methyl steroid + 3 reduced [NADPH--hemoprotein reductase] + 3 O2 = a Delta(14) steroid + formate + 3 oxidized [NADPH--hemoprotein reductase] + 4 H2O + 4 H(+). The catalysed reaction is a 14alpha-methyl steroid + reduced [NADPH--hemoprotein reductase] + O2 = a 14alpha-hydroxymethyl steroid + oxidized [NADPH--hemoprotein reductase] + H2O + H(+). The enzyme catalyses a 14alpha-hydroxymethyl steroid + reduced [NADPH--hemoprotein reductase] + O2 = a 14alpha-formyl steroid + oxidized [NADPH--hemoprotein reductase] + 2 H2O + H(+). It carries out the reaction a 14alpha-formyl steroid + reduced [NADPH--hemoprotein reductase] + O2 = a Delta(14) steroid + formate + oxidized [NADPH--hemoprotein reductase] + H2O + 2 H(+). It catalyses the reaction lanosterol + 3 reduced [NADPH--hemoprotein reductase] + 3 O2 = 4,4-dimethyl-5alpha-cholesta-8,14,24-trien-3beta-ol + formate + 3 oxidized [NADPH--hemoprotein reductase] + 4 H2O + 4 H(+). The catalysed reaction is lanosterol + reduced [NADPH--hemoprotein reductase] + O2 = 32-hydroxylanosterol + oxidized [NADPH--hemoprotein reductase] + H2O + H(+). The enzyme catalyses 32-hydroxylanosterol + reduced [NADPH--hemoprotein reductase] + O2 = 32-oxolanosterol + oxidized [NADPH--hemoprotein reductase] + 2 H2O + H(+). It carries out the reaction 32-oxolanosterol + reduced [NADPH--hemoprotein reductase] + O2 = 4,4-dimethyl-5alpha-cholesta-8,14,24-trien-3beta-ol + formate + oxidized [NADPH--hemoprotein reductase] + H2O + 2 H(+). It catalyses the reaction eburicol + 3 reduced [NADPH--hemoprotein reductase] + 3 O2 = 14-demethyleburicol + formate + 3 oxidized [NADPH--hemoprotein reductase] + 4 H2O + 4 H(+). The catalysed reaction is eburicol + reduced [NADPH--hemoprotein reductase] + O2 = 32-hydroxyeburicol + oxidized [NADPH--hemoprotein reductase] + H2O + H(+). The enzyme catalyses 32-hydroxyeburicol + reduced [NADPH--hemoprotein reductase] + O2 = 32-oxoeburicol + oxidized [NADPH--hemoprotein reductase] + 2 H2O + H(+). It carries out the reaction 32-oxoeburicol + reduced [NADPH--hemoprotein reductase] + O2 = 14-demethyleburicol + formate + oxidized [NADPH--hemoprotein reductase] + H2O + 2 H(+). Its function is as follows. Sterol 14-alpha demethylase; part of the gene cluster that mediates the biosynthesis of the tetrahydropyranyl antifungal agent restricticin that acts as an inhibitor of CYP51 and blocks the ergosterol biosynthesis. Sterol 14-alpha-demethylase plays a critical role in the biosynthesis of ergosterol, the major sterol component in fungal membranes that participates in a variety of functions. ResB acts as a self-resistant CYP51 that contains mutations found in CYP51s isolated from azole resistance strains and that is not inhibited by the final product of the cluster, restricticin. The sequence is that of Sterol 14-alpha demethylase resB from Aspergillus sclerotiorum.